A 38-amino-acid polypeptide reads, in one-letter code: Large ribosomal subunit protein bL36 (38 aa).

The protein belongs to the bacterial ribosomal protein bL36 family.

This chain is Large ribosomal subunit protein bL36, found in Lactobacillus acidophilus (strain ATCC 700396 / NCK56 / N2 / NCFM).